Here is a 260-residue protein sequence, read N- to C-terminus: UPF0246 protein SCO2297 (260 aa).

The protein belongs to the UPF0246 family.

The chain is UPF0246 protein SCO2297 from Streptomyces coelicolor (strain ATCC BAA-471 / A3(2) / M145).